Here is a 96-residue protein sequence, read N- to C-terminus: MEITSVLLKPLLTEKTTMLKDEAQQVAFMVHTQANKLEIKQAVEKAFDVKVEAVNVVRRAPLNRERQGRVVGRKPGWKKAYVTLRQGDKIEFFEGV.

This sequence belongs to the universal ribosomal protein uL23 family. In terms of assembly, part of the 50S ribosomal subunit. Contacts protein L29, and trigger factor when it is bound to the ribosome.

Functionally, one of the early assembly proteins it binds 23S rRNA. One of the proteins that surrounds the polypeptide exit tunnel on the outside of the ribosome. Forms the main docking site for trigger factor binding to the ribosome. This chain is Large ribosomal subunit protein uL23, found in Desulfovibrio desulfuricans (strain ATCC 27774 / DSM 6949 / MB).